A 370-amino-acid chain; its full sequence is Cobalt-precorrin-5B C(1)-methyltransferase (370 aa).

It belongs to the CbiD family.

It catalyses the reaction Co-precorrin-5B + S-adenosyl-L-methionine = Co-precorrin-6A + S-adenosyl-L-homocysteine. It participates in cofactor biosynthesis; adenosylcobalamin biosynthesis; cob(II)yrinate a,c-diamide from sirohydrochlorin (anaerobic route): step 6/10. Catalyzes the methylation of C-1 in cobalt-precorrin-5B to form cobalt-precorrin-6A. The chain is Cobalt-precorrin-5B C(1)-methyltransferase from Prochlorococcus marinus (strain MIT 9312).